We begin with the raw amino-acid sequence, 236 residues long: Syntaxin-8 (236 aa).

Over 1–215 the chain is Cytoplasmic; the sequence is MAPDPWFSTY…LVDRKSASCG (215 aa). The stretch at 42-65 forms a coiled coil; that stretch reads LTIRTLLKNLKVKIDLLKDLLLRA. Phosphoserine is present on residues Ser102 and Ser160. A t-SNARE coiled-coil homology domain is found at 145–207; it reads QKIIQEQDAG…RTEARRVTLV (63 aa). The helical; Anchor for type IV membrane protein transmembrane segment at 216–232 threads the bilayer; the sequence is MIMVILLLLVAIVVVAV. Residues 233-236 are Vesicular-facing; it reads WPTN.

This sequence belongs to the syntaxin family. Part of the SNARE core complex containing STX7, VAMP8 and VTI1B. Interacts with VAMP8. Forms a SNARE complex with STX7, VTI1B and VAMP8 which functions in the homotypic fusion of late endosomes. Component of the SNARE complex composed of STX7, STX8, VAMP7 and VTI1B that is required for heterotypic fusion of late endosomes with lysosomes. Interacts with HECTD3. Interacts with TPC1. Post-translationally, ubiquitinated by HECTD3. In terms of tissue distribution, widely expressed in all tissues examined.

Its subcellular location is the membrane. Vesicle trafficking protein that functions in the early secretory pathway, possibly by mediating retrograde transport from cis-Golgi membranes to the ER. The protein is Syntaxin-8 (Stx8) of Rattus norvegicus (Rat).